The chain runs to 138 residues: MRTLWIMAVLLVGVEGHLLQFRKMIKKMTGKEPIVSYAFYGCYCGKGGRGKPKDATDRCCFVHDCCYEKVTGCDPKWDYYTYSLENGDIVCGGDNPCTKVVCECDKAAAICFRDNLKTYKKRYMTFPDIFCTDPTEKC.

A signal peptide spans 1-16 (MRTLWIMAVLLVGVEG). 7 cysteine pairs are disulfide-bonded: cysteine 42–cysteine 131, cysteine 44–cysteine 60, cysteine 59–cysteine 111, cysteine 65–cysteine 138, cysteine 66–cysteine 104, cysteine 73–cysteine 97, and cysteine 91–cysteine 102. Positions 43, 45, and 47 each coordinate Ca(2+). Histidine 63 is an active-site residue. Aspartate 64 contributes to the Ca(2+) binding site. The active site involves aspartate 105.

It belongs to the phospholipase A2 family. Group II subfamily. D49 sub-subfamily. Ca(2+) serves as cofactor. Expressed by the venom gland.

The protein resides in the secreted. The catalysed reaction is a 1,2-diacyl-sn-glycero-3-phosphocholine + H2O = a 1-acyl-sn-glycero-3-phosphocholine + a fatty acid + H(+). Its function is as follows. Snake venom phospholipase A2 (PLA2) that can cleave arachidonate at the sn-2 position from phospholipides in the micellar state or in bilayer membranes. PLA2 catalyzes the calcium-dependent hydrolysis of the 2-acyl groups in 3-sn-phosphoglycerides. This is Basic phospholipase A2 PL-Y from Protobothrops flavoviridis (Habu).